The primary structure comprises 427 residues: Chaperone SurA (427 aa).

An N-terminal signal peptide occupies residues 1–13 (MLGVALLSGAVHA). 2 consecutive PpiC domains span residues 164–265 (SEEY…KLEE) and 275–374 (RDEV…EVLG).

Its subcellular location is the periplasm. It catalyses the reaction [protein]-peptidylproline (omega=180) = [protein]-peptidylproline (omega=0). Its function is as follows. Chaperone involved in the correct folding and assembly of outer membrane proteins. Recognizes specific patterns of aromatic residues and the orientation of their side chains, which are found more frequently in integral outer membrane proteins. May act in both early periplasmic and late outer membrane-associated steps of protein maturation. The polypeptide is Chaperone SurA (Pseudomonas putida (strain ATCC 47054 / DSM 6125 / CFBP 8728 / NCIMB 11950 / KT2440)).